A 445-amino-acid polypeptide reads, in one-letter code: 26S proteasome regulatory subunit RPN5 (445 aa).

Ser-2 carries the post-translational modification N-acetylserine. One can recognise a PCI domain in the interval 233-407 (EYLEVAQYLQ…KIVNFEKPKN (175 aa)).

It belongs to the proteasome subunit p55 family. In terms of processing, N-acetylated by NAT1.

In terms of biological role, acts as a regulatory subunit of the 26S proteasome which is involved in the ATP-dependent degradation of ubiquitinated proteins. The sequence is that of 26S proteasome regulatory subunit RPN5 (RPN5) from Saccharomyces cerevisiae (strain ATCC 204508 / S288c) (Baker's yeast).